The following is a 444-amino-acid chain: NADH-quinone oxidoreductase subunit F (444 aa).

61–70 (GRGGAGFSTG) contacts NAD(+). An FMN-binding site is contributed by 176–223 (GAGRYICGEETALINSLEGRRANPRSKPPFPAVFGLWGKPTCVNNVET). [4Fe-4S] cluster contacts are provided by C353, C356, C359, and C400.

Belongs to the complex I 51 kDa subunit family. Composed of 13 different subunits. Subunits NuoCD, E, F, and G constitute the peripheral sector of the complex. The cofactor is FMN. It depends on [4Fe-4S] cluster as a cofactor.

The enzyme catalyses a quinone + NADH + 5 H(+)(in) = a quinol + NAD(+) + 4 H(+)(out). NDH-1 shuttles electrons from NADH, via FMN and iron-sulfur (Fe-S) centers, to quinones in the respiratory chain. Couples the redox reaction to proton translocation (for every two electrons transferred, four hydrogen ions are translocated across the cytoplasmic membrane), and thus conserves the redox energy in a proton gradient. The polypeptide is NADH-quinone oxidoreductase subunit F (nuoF) (Buchnera aphidicola subsp. Acyrthosiphon pisum (strain APS) (Acyrthosiphon pisum symbiotic bacterium)).